The sequence spans 449 residues: Phosphoglucosamine mutase (449 aa).

S100 (phosphoserine intermediate) is an active-site residue. Mg(2+)-binding residues include S100, D241, D243, and D245. At S100 the chain carries Phosphoserine.

The protein belongs to the phosphohexose mutase family. Mg(2+) serves as cofactor. Post-translationally, activated by phosphorylation.

It carries out the reaction alpha-D-glucosamine 1-phosphate = D-glucosamine 6-phosphate. Functionally, catalyzes the conversion of glucosamine-6-phosphate to glucosamine-1-phosphate. The sequence is that of Phosphoglucosamine mutase from Clostridium botulinum (strain Kyoto / Type A2).